The sequence spans 120 residues: Large ribosomal subunit protein bL17 (120 aa).

Belongs to the bacterial ribosomal protein bL17 family. Part of the 50S ribosomal subunit. Contacts protein L32.

The polypeptide is Large ribosomal subunit protein bL17 (Bacillus velezensis (strain DSM 23117 / BGSC 10A6 / LMG 26770 / FZB42) (Bacillus amyloliquefaciens subsp. plantarum)).